Consider the following 404-residue polypeptide: Demethylphylloquinone reductase NdbB (404 aa).

7 to 43 (RICILGGGFGGLYTALRLGQLSWEGHTPPEIVLVDQR) lines the FAD pocket. 159–195 (IRIAIVGGGYSGVELAAKLGDRLGERGRIRIIERGKE) serves as a coordination point for NADP(+).

This sequence belongs to the NADH dehydrogenase family. It depends on FAD as a cofactor.

The enzyme catalyses demethylphylloquinone + NADPH + H(+) = demethylphylloquinol + NADP(+). It functions in the pathway cofactor biosynthesis; phylloquinone biosynthesis. With respect to regulation, inhibited by dicumarol. Its function is as follows. Bifunctional oxidoreductase probably ables to act both on prenyl naphthoquinones and on prenyl benzoquinones. Catalyzes the penultimate step in the biosynthesis of vitamin K1. The sequence is that of Demethylphylloquinone reductase NdbB from Synechocystis sp. (strain ATCC 27184 / PCC 6803 / Kazusa).